Reading from the N-terminus, the 474-residue chain is 6-phospho-beta-galactosidase (474 aa).

5 residues coordinate D-galactose 6-phosphate: Gln-19, His-116, Asn-159, Glu-160, and Asn-297. The active-site Proton donor is Glu-160. Glu-375 (nucleophile) is an active-site residue. D-galactose 6-phosphate is bound by residues Ser-433, Trp-434, Lys-440, and Tyr-442.

The protein belongs to the glycosyl hydrolase 1 family.

The enzyme catalyses a 6-phospho-beta-D-galactoside + H2O = D-galactose 6-phosphate + an alcohol. Its pathway is carbohydrate metabolism; lactose degradation; D-galactose 6-phosphate and beta-D-glucose from lactose 6-phosphate: step 1/1. The chain is 6-phospho-beta-galactosidase from Lacticaseibacillus casei (strain BL23) (Lactobacillus casei).